Here is a 795-residue protein sequence, read N- to C-terminus: Protocadherin beta-5 (795 aa).

An N-terminal signal peptide occupies residues 1 to 30 (METALAKTPQKRQVMFLAILLLLWEAGSEA). Over 31–689 (VRYSIPEETE…AQADSLTVYL (659 aa)) the chain is Extracellular. 5 consecutive Cadherin domains span residues 35-133 (IPEE…SPEF), 138-242 (MLLK…APEF), 247-346 (YEVQ…APEL), 351-450 (LSSP…APAF), and 455-560 (YTLF…SPFV). Asparagine 169 is a glycosylation site (N-linked (GlcNAc...) asparagine). N6-acetyllysine is present on lysine 296. N-linked (GlcNAc...) asparagine glycans are attached at residues asparagine 417 and asparagine 435. N-linked (GlcNAc...) asparagine glycosylation occurs at asparagine 566. Residues 567 to 670 (GSAPCTELVP…LVDGFSQPYL (104 aa)) enclose the Cadherin 6 domain. Residues 690-710 (VVALASVSSLFLFSVLLFVAV) form a helical membrane-spanning segment. Residues 711-795 (RLCRRSRAAP…AAFRNSFGLN (85 aa)) are Cytoplasmic-facing.

It is found in the cell membrane. In terms of biological role, potential calcium-dependent cell-adhesion protein. May be involved in the establishment and maintenance of specific neuronal connections in the brain. In Pan troglodytes (Chimpanzee), this protein is Protocadherin beta-5 (PCDHB5).